Consider the following 271-residue polypeptide: Putative phosphoenolpyruvate synthase regulatory protein (271 aa).

Position 151–158 (151–158 (GVSRSGKT)) interacts with ADP.

The protein belongs to the pyruvate, phosphate/water dikinase regulatory protein family. PSRP subfamily.

The catalysed reaction is [pyruvate, water dikinase] + ADP = [pyruvate, water dikinase]-phosphate + AMP + H(+). It catalyses the reaction [pyruvate, water dikinase]-phosphate + phosphate + H(+) = [pyruvate, water dikinase] + diphosphate. In terms of biological role, bifunctional serine/threonine kinase and phosphorylase involved in the regulation of the phosphoenolpyruvate synthase (PEPS) by catalyzing its phosphorylation/dephosphorylation. The protein is Putative phosphoenolpyruvate synthase regulatory protein of Burkholderia multivorans (strain ATCC 17616 / 249).